The following is a 259-amino-acid chain: Small ribosomal subunit protein uS2 (259 aa).

The protein belongs to the universal ribosomal protein uS2 family.

The protein is Small ribosomal subunit protein uS2 of Streptococcus pneumoniae (strain 70585).